Consider the following 437-residue polypeptide: Phosphomethylpyrimidine synthase (437 aa).

Substrate contacts are provided by residues N69, M98, Y127, H163, 185–187 (SRG), 226–229 (DACR), and E265. H269 contacts Zn(2+). A substrate-binding site is contributed by Y292. A Zn(2+)-binding site is contributed by H333. The [4Fe-4S] cluster site is built by C409, C412, and C416.

Belongs to the ThiC family. Requires [4Fe-4S] cluster as cofactor.

The catalysed reaction is 5-amino-1-(5-phospho-beta-D-ribosyl)imidazole + S-adenosyl-L-methionine = 4-amino-2-methyl-5-(phosphooxymethyl)pyrimidine + CO + 5'-deoxyadenosine + formate + L-methionine + 3 H(+). The protein operates within cofactor biosynthesis; thiamine diphosphate biosynthesis. In terms of biological role, catalyzes the synthesis of the hydroxymethylpyrimidine phosphate (HMP-P) moiety of thiamine from aminoimidazole ribotide (AIR) in a radical S-adenosyl-L-methionine (SAM)-dependent reaction. The polypeptide is Phosphomethylpyrimidine synthase (Clostridium botulinum (strain Loch Maree / Type A3)).